We begin with the raw amino-acid sequence, 448 residues long: Tubulin beta chain (448 aa).

GTP is bound by residues Gln11, Glu69, Ser138, Gly142, Thr143, Gly144, Asn204, and Asn226. Residue Glu69 participates in Mg(2+) binding.

Belongs to the tubulin family. As to quaternary structure, dimer of alpha and beta chains. A typical microtubule is a hollow water-filled tube with an outer diameter of 25 nm and an inner diameter of 15 nM. Alpha-beta heterodimers associate head-to-tail to form protofilaments running lengthwise along the microtubule wall with the beta-tubulin subunit facing the microtubule plus end conferring a structural polarity. Microtubules usually have 13 protofilaments but different protofilament numbers can be found in some organisms and specialized cells. Mg(2+) is required as a cofactor.

Its subcellular location is the cytoplasm. The protein localises to the cytoskeleton. In terms of biological role, tubulin is the major constituent of microtubules, a cylinder consisting of laterally associated linear protofilaments composed of alpha- and beta-tubulin heterodimers. Microtubules grow by the addition of GTP-tubulin dimers to the microtubule end, where a stabilizing cap forms. Below the cap, tubulin dimers are in GDP-bound state, owing to GTPase activity of alpha-tubulin. The polypeptide is Tubulin beta chain (TUB1) (Melampsora lini (Rust fungus)).